The following is a 273-amino-acid chain: Undecaprenyl-diphosphatase (273 aa).

7 helical membrane-spanning segments follow: residues 13-35, 45-62, 82-102, 108-128, 186-206, 219-239, and 250-270; these read GLVE…VFGN, VFEI…VFEY, FVLN…LFDK, LFNP…ILWV, TEFS…YDVL, LILI…KALL, and FAYY…SGWI.

The protein belongs to the UppP family.

It is found in the cell inner membrane. It catalyses the reaction di-trans,octa-cis-undecaprenyl diphosphate + H2O = di-trans,octa-cis-undecaprenyl phosphate + phosphate + H(+). Catalyzes the dephosphorylation of undecaprenyl diphosphate (UPP). Confers resistance to bacitracin. In Neisseria gonorrhoeae (strain ATCC 700825 / FA 1090), this protein is Undecaprenyl-diphosphatase.